We begin with the raw amino-acid sequence, 481 residues long: Ribulose bisphosphate carboxylase large chain (481 aa).

Positions Met1–Ser2 are excised as a propeptide. Residue Pro3 is modified to N-acetylproline. An N6,N6,N6-trimethyllysine modification is found at Lys14. Substrate is bound by residues Asn123 and Thr173. Residue Lys175 is the Proton acceptor of the active site. Lys177 lines the substrate pocket. Positions 201, 203, and 204 each coordinate Mg(2+). At Lys201 the chain carries N6-carboxylysine. His294 (proton acceptor) is an active-site residue. Residues Arg295, His327, and Ser379 each contribute to the substrate site.

It belongs to the RuBisCO large chain family. Type I subfamily. In terms of assembly, heterohexadecamer of 8 large chains and 8 small chains; disulfide-linked. The disulfide link is formed within the large subunit homodimers. It depends on Mg(2+) as a cofactor. The disulfide bond which can form in the large chain dimeric partners within the hexadecamer appears to be associated with oxidative stress and protein turnover.

Its subcellular location is the plastid. It is found in the chloroplast. It catalyses the reaction 2 (2R)-3-phosphoglycerate + 2 H(+) = D-ribulose 1,5-bisphosphate + CO2 + H2O. The enzyme catalyses D-ribulose 1,5-bisphosphate + O2 = 2-phosphoglycolate + (2R)-3-phosphoglycerate + 2 H(+). Functionally, ruBisCO catalyzes two reactions: the carboxylation of D-ribulose 1,5-bisphosphate, the primary event in carbon dioxide fixation, as well as the oxidative fragmentation of the pentose substrate in the photorespiration process. Both reactions occur simultaneously and in competition at the same active site. The chain is Ribulose bisphosphate carboxylase large chain from Coffea arabica (Arabian coffee).